The primary structure comprises 94 residues: Large ribosomal subunit protein eL33 (94 aa).

This sequence belongs to the eukaryotic ribosomal protein eL33 family.

This chain is Large ribosomal subunit protein eL33, found in Aeropyrum pernix (strain ATCC 700893 / DSM 11879 / JCM 9820 / NBRC 100138 / K1).